The following is a 505-amino-acid chain: MSVPRPSRAALLLLVPLLALSAGASDVVELSDADFESGLAERPGLVLVEFFAPWCGHCKRLAPEYEAAATRLKGIVPLVKVDCTANSNTCNKYGVSGYPTLKIFRDGEESGTYDGPRTADGIVSHLKKQAGPASVALSSVADFEKFIGDKDASVVGFFRDASGDAYSEFMKAANNLRDNYRFAHTSEEQLVQKYEEDGEGVVLYRPSRLANKFEDSTVKYTEDKITSAKIKKFIQENIFGICPHMTEDNKDLIQGKDLLVAYYDVDYEKNAKGSNYWRNRVMMIAKKFLDAGHKLSFAVASRKTFGHELSEFGLDNSVGEAPVVAIRTAKGDKFVMQEEFSRDGKALERFLQDYFDGNLKKYLKSEPVPENNDGPVKVVVAENFDEIVNAEDKDVLIEFYAPWCGHCKNLEPKYKELGEKLSKDPNIVIAKMDATANDVPSPYEVRGFPTIYFAPAGKKQSPKKYEGGREVSDFISYLKREATSTPVLQEEDKAKKSKKKAKEDL.

The signal sequence occupies residues 1–24 (MSVPRPSRAALLLLVPLLALSAGA). Thioredoxin domains lie at 25–131 (SDVV…KQAG) and 341–483 (SRDG…REAT). Catalysis depends on nucleophile residues cysteine 55 and cysteine 58. 3 disulfide bridges follow: cysteine 55-cysteine 58, cysteine 83-cysteine 90, and cysteine 404-cysteine 407. Residues cysteine 404 and cysteine 407 each act as nucleophile in the active site. The disordered stretch occupies residues 486 to 505 (PVLQEEDKAKKSKKKAKEDL). A compositionally biased stretch (basic residues) spans 495–505 (KKSKKKAKEDL). The Prevents secretion from ER signature appears at 502–505 (KEDL).

The protein belongs to the protein disulfide isomerase family.

The protein localises to the endoplasmic reticulum. It localises to the endoplasmic reticulum lumen. Its subcellular location is the melanosome. The catalysed reaction is Catalyzes the rearrangement of -S-S- bonds in proteins.. In terms of biological role, protein disulfide isomerase that catalyzes the formation, isomerization, and reduction or oxidation of disulfide bonds in client proteins and functions as a protein folding chaperone. The chain is Protein disulfide-isomerase A3 (PDIA3) from Gallus gallus (Chicken).